The primary structure comprises 280 residues: ESX-1 secretion-associated protein EspJ (280 aa).

Ser-70 is subject to Phosphoserine. 2 stretches are compositionally biased toward low complexity: residues 167-181 and 246-280; these read QTIS…QSAQ and PAQA…TTTL. A disordered region spans residues 167-280; sequence QTISQTAQQA…TPAPSTTTTL (114 aa).

Phosphorylated at Ser-70.

It localises to the secreted. Could be involved in regulation of growth and intracellular survival. This is ESX-1 secretion-associated protein EspJ from Mycobacterium tuberculosis (strain CDC 1551 / Oshkosh).